The chain runs to 397 residues: Riboflavin biosynthesis protein RibBA (397 aa).

Positions M1 to H199 are DHBP synthase. D-ribulose 5-phosphate-binding positions include R26–E27, D31, R138–T142, and E162. E27 provides a ligand contact to Mg(2+). Residue H141 coordinates Mg(2+). The interval H200–L397 is GTP cyclohydrolase II. R250–E254 serves as a coordination point for GTP. Zn(2+) contacts are provided by C255, C266, and C268. GTP is bound by residues Q271, E293–R295, and T315. Catalysis depends on D327, which acts as the Proton acceptor; for GTP cyclohydrolase activity. R329 functions as the Nucleophile; for GTP cyclohydrolase activity in the catalytic mechanism. 2 residues coordinate GTP: T350 and K355.

It in the N-terminal section; belongs to the DHBP synthase family. The protein in the C-terminal section; belongs to the GTP cyclohydrolase II family. It depends on Mg(2+) as a cofactor. Mn(2+) serves as cofactor. The cofactor is Zn(2+).

The enzyme catalyses D-ribulose 5-phosphate = (2S)-2-hydroxy-3-oxobutyl phosphate + formate + H(+). It catalyses the reaction GTP + 4 H2O = 2,5-diamino-6-hydroxy-4-(5-phosphoribosylamino)-pyrimidine + formate + 2 phosphate + 3 H(+). It participates in cofactor biosynthesis; riboflavin biosynthesis; 2-hydroxy-3-oxobutyl phosphate from D-ribulose 5-phosphate: step 1/1. Its pathway is cofactor biosynthesis; riboflavin biosynthesis; 5-amino-6-(D-ribitylamino)uracil from GTP: step 1/4. Functionally, catalyzes the conversion of D-ribulose 5-phosphate to formate and 3,4-dihydroxy-2-butanone 4-phosphate. Catalyzes the conversion of GTP to 2,5-diamino-6-ribosylamino-4(3H)-pyrimidinone 5'-phosphate (DARP), formate and pyrophosphate. In Bacillus cereus (strain ATCC 14579 / DSM 31 / CCUG 7414 / JCM 2152 / NBRC 15305 / NCIMB 9373 / NCTC 2599 / NRRL B-3711), this protein is Riboflavin biosynthesis protein RibBA.